Consider the following 304-residue polypeptide: Murein tetrapeptide carboxypeptidase (304 aa).

The Nucleophile role is filled by S106. Catalysis depends on charge relay system residues E200 and H270.

Belongs to the peptidase S66 family.

It is found in the cytoplasm. It catalyses the reaction N-acetyl-D-glucosaminyl-N-acetylmuramoyl-L-alanyl-meso-2,6-diaminoheptanedioyl-D-alanine + H2O = N-acetyl-D-glucosaminyl-N-acetylmuramoyl-L-alanyl-meso-2,6-diaminoheptanedioate + D-alanine. It functions in the pathway cell wall biogenesis; peptidoglycan recycling. Inhibited by beta-lactams containing a D-amino acid side chain. Its function is as follows. Releases the terminal D-alanine residue from the cytoplasmic tetrapeptide recycling product L-Ala-gamma-D-Glu-meso-Dap-D-Ala. To a lesser extent, can also cleave D-Ala from murein derivatives containing the tetrapeptide, i.e. MurNAc-tetrapeptide, UDP-MurNAc-tetrapeptide, GlcNAc-MurNAc-tetrapeptide, and GlcNAc-anhMurNAc-tetrapeptide. Does not act on murein sacculi or cross-linked muropeptides. The tripeptides produced by the LcdA reaction can then be reused as peptidoglycan building blocks; LcdA is thereby involved in murein recycling. Is also essential for viability during stationary phase. The chain is Murein tetrapeptide carboxypeptidase (ldcA) from Escherichia coli (strain K12).